A 335-amino-acid chain; its full sequence is Probable peptide ABC transporter ATP-binding protein y4tR (335 aa).

The 250-residue stretch at 15-264 (VRDLETHFYG…PTHPYTRALM (250 aa)) folds into the ABC transporter domain. ATP is bound at residue 49–56 (GESGCGKS).

It belongs to the ABC transporter superfamily.

The protein localises to the cell inner membrane. Its function is as follows. Probably part of a binding-protein-dependent transport system y4tOPQRS for a peptide. Probably responsible for energy coupling to the transport system. The protein is Probable peptide ABC transporter ATP-binding protein y4tR of Sinorhizobium fredii (strain NBRC 101917 / NGR234).